The primary structure comprises 589 residues: Protein NRT1/ PTR FAMILY 4.7 (589 aa).

The next 12 membrane-spanning stretches (helical) occupy residues 59–79, 105–125, 127–147, 160–180, 201–221, 230–250, 344–364, 383–403, 429–449, 471–491, 520–540, and 560–580; these read GMLA…AFLA, AFMG…DAFF, TFHI…VLTV, VFLF…KGSL, FFFN…VTVV, WSYG…VFLA, IVIK…CLAQ, FTVP…ILAP, IGTG…VETK, LPIT…ADLF, LAMG…VTGL, and FYWL…FWAS.

It belongs to the major facilitator superfamily. Proton-dependent oligopeptide transporter (POT/PTR) (TC 2.A.17) family. In terms of tissue distribution, expressed in flowers.

The protein resides in the membrane. This chain is Protein NRT1/ PTR FAMILY 4.7 (NPF4.7), found in Arabidopsis thaliana (Mouse-ear cress).